The following is a 288-amino-acid chain: Protein sprouty homolog 3 (288 aa).

The SPR domain maps to 154–260 (KCVPCTAARP…GYDSLRRPGC (107 aa)).

The protein belongs to the sprouty family. As to quaternary structure, interacts with TESK1. Interacts with USP11. Interacts with CAV1 (via C-terminus). In terms of tissue distribution, widely expressed; particularly in the fetal tissues. Expressed in the brain with expression the highest in Purkinje cells in the cerebellum (at protein level). Expressed in the myocardium of the heart.

It is found in the cytoplasm. In terms of biological role, inhibits neurite branching, arbor length and neurite complexity. Inhibits EGF-mediated p42/44 ERK signaling. Negatively regulates the MAPK cascade, resulting in a reduction of extracellular matrix protein accumulation. May function as an antagonist of fibroblast growth factor (FGF) pathways and may negatively modulate respiratory organogenesis. This is Protein sprouty homolog 3 from Homo sapiens (Human).